The primary structure comprises 114 residues: Protein ORF3 (114 aa).

Hydrophobic stretches follow at residues 6-24 and 33-53; these read WALG…CCSR and AVVG…GLIL. Positions 28–68 are interaction with host HPX; it reads VSRLAAVVGGAAAVPAVVSGVTGLILSPSQSPIFIQPTPSP. Residues 48–72 are interaction with the capsid protein; sequence VTGLILSPSQSPIFIQPTPSPRMSP. Phosphoserine; by host is present on S71. The interval 72–114 is homodimerization, and interaction with host AMBP/bikunin; the sequence is PLRPGLDLVFANPSDHSAPLGATRPSAPPLPHVVDLPQLGPRR. Residues 85-114 are disordered; it reads SDHSAPLGATRPSAPPLPHVVDLPQLGPRR. An interaction with host SRC, HCK, FYN, PIK3R3 and GRB2 region spans residues 95–104; that stretch reads RPSAPPLPHV. A PTAP/PSAP motif motif is present at residues 96–99; that stretch reads PSAP.

It belongs to the hepevirus ORF3 protein family. As to quaternary structure, forms homooligomers. Interacts with host SRC, HCK, FYN, PIK3R3 and GRB2 (via SH3 domain); binding does not activate the kinases. Interacts with host AMBP/bikunin and AMBP/alpha-1-microglobulin peptides. Interacts with host HPX/hemopexin. Interacts (when phosphorylated) with capsid protein ORF2. Interacts with host TSG101; this interaction plays a role in viral release from the host cell. Interacts with host SIRPA; this interaction down-regulates the phosphorylation of host IRF3. Palmitoylated in the N-terminus.

The protein localises to the host endoplasmic reticulum membrane. It localises to the host cytoplasm. The protein resides in the host cytoskeleton. Its subcellular location is the virion. It is found in the host cell membrane. Its function is as follows. Small multifunctional phosphoprotein involved in virion morphogenesis, egress and counteracting host innate immunity. Plays critical roles in the final steps of viral release by interacting with host TSG101, a member of the vacuolar protein-sorting pathway and using other cellular host proteins involved in vesicle formation pathway. Also acts as a viroporin and forms ion conductive pores allowing viral particle release. Impairs the generation of type I interferon by down-regulating host TLR3 and TLR7 as well as their downstream signaling pathways. Down-regulates the phosphorylation of host IRF3 via the interaction with host SIRP-alpha, thereby inhibiting IFN-I expression. Interacts with host microtubules. This is Protein ORF3 from Hepatitis E virus genotype 1 (isolate Human/India/Hyderabad) (HEV-1).